Consider the following 388-residue polypeptide: Succinate--CoA ligase [ADP-forming] subunit beta (388 aa).

Positions 9 to 244 (KEIFRSMGVA…LEEEDPKEIE (236 aa)) constitute an ATP-grasp domain. ATP contacts are provided by residues Lys46, 53-55 (GRG), Glu99, Cys102, and Glu107. Mg(2+) contacts are provided by Asn199 and Asp213. Substrate is bound by residues Asn264 and 321 to 323 (GIM).

This sequence belongs to the succinate/malate CoA ligase beta subunit family. Heterotetramer of two alpha and two beta subunits. It depends on Mg(2+) as a cofactor.

The catalysed reaction is succinate + ATP + CoA = succinyl-CoA + ADP + phosphate. The enzyme catalyses GTP + succinate + CoA = succinyl-CoA + GDP + phosphate. The protein operates within carbohydrate metabolism; tricarboxylic acid cycle; succinate from succinyl-CoA (ligase route): step 1/1. Functionally, succinyl-CoA synthetase functions in the citric acid cycle (TCA), coupling the hydrolysis of succinyl-CoA to the synthesis of either ATP or GTP and thus represents the only step of substrate-level phosphorylation in the TCA. The beta subunit provides nucleotide specificity of the enzyme and binds the substrate succinate, while the binding sites for coenzyme A and phosphate are found in the alpha subunit. The protein is Succinate--CoA ligase [ADP-forming] subunit beta of Staphylococcus haemolyticus (strain JCSC1435).